Here is a 739-residue protein sequence, read N- to C-terminus: Sulfate transporter (739 aa).

The tract at residues 1 to 27 (MSSESKEQHNVSPRDSAEGNDSYPSGI) is disordered. S12 and S16 each carry phosphoserine. Helical transmembrane passes span 112 to 132 (VMSGLIVGILLVPQSIAYSLL) and 137 to 157 (PVYGLYTSFFASIIYFLLGTS). N-linked (GlcNAc...) asparagine glycosylation is found at N199 and N205. A run of 2 helical transmembrane segments spans residues 219–239 (IMVGSTVTFIAGVYQVAMGFF) and 242–262 (GFVSVYLSDALLSGFVTGASF). A glycan (N-linked (GlcNAc...) asparagine) is linked at N357. 4 consecutive transmembrane segments (helical) span residues 378-398 (LIPSVAVDAIAISIIGFAITV), 420-440 (AIGFCNIIPSFFHCFTTSAAL), 455-475 (LSGVVTALVLLLVLLVIAPLF), and 524-544 (LLSTEIGLLVGVCFSIFCVIL). Positions 568-719 (AYKNLQIKPG…YSVYEAMAFA (152 aa)) constitute an STAS domain.

Belongs to the SLC26A/SulP transporter (TC 2.A.53) family. N-glycosylated. In terms of tissue distribution, ubiquitously expressed.

The protein resides in the cell membrane. It is found in the apical cell membrane. It carries out the reaction oxalate(in) + sulfate(out) = oxalate(out) + sulfate(in). The catalysed reaction is sulfate(out) + 2 chloride(in) = sulfate(in) + 2 chloride(out). It catalyses the reaction oxalate(out) + 2 chloride(in) = oxalate(in) + 2 chloride(out). The enzyme catalyses bromide(in) + chloride(out) = bromide(out) + chloride(in). It carries out the reaction nitrate(in) + chloride(out) = nitrate(out) + chloride(in). The catalysed reaction is iodide(in) + chloride(out) = iodide(out) + chloride(in). An extracellular acidic pH inhibits chloride-sulfate and chloride-oxalate exchange activity whereas an intracellular acidic pH activates chloride-sulfate exchange with no effect on chloride-oxalate exchange activity. Its function is as follows. Sulfate transporter which mediates sulfate uptake into chondrocytes in order to maintain adequate sulfation of proteoglycans which is needed for cartilage development. Mediates electroneutral anion exchange of sulfate ions for oxalate ions and of sulfate and oxalate ions for chloride ions. Mediates exchange of sulfate and oxalate ions for hydroxyl ions and of chloride ions for bromide, iodide and nitrate ions. The coupling of sulfate transport to both hydroxyl and chloride ions likely serves to ensure transport at both acidic pH when most sulfate uptake is mediated by sulfate-hydroxide exchange and alkaline pH when most sulfate uptake is mediated by sulfate-chloride exchange. Essential for chondrocyte proliferation, differentiation and cell size expansion. The protein is Sulfate transporter (SLC26A2) of Homo sapiens (Human).